A 669-amino-acid chain; its full sequence is DNA ligase (669 aa).

NAD(+) contacts are provided by residues 35–39 (DSVYD), 84–85 (SL), and Glu116. Lys118 functions as the N6-AMP-lysine intermediate in the catalytic mechanism. NAD(+)-binding residues include Arg139, Glu176, Lys291, and Lys315. The Zn(2+) site is built by Cys409, Cys412, Cys427, and Cys432. The BRCT domain maps to 591–669 (TTKATLAGKT…EAQLLELIKA (79 aa)).

This sequence belongs to the NAD-dependent DNA ligase family. LigA subfamily. Mg(2+) is required as a cofactor. Mn(2+) serves as cofactor.

The enzyme catalyses NAD(+) + (deoxyribonucleotide)n-3'-hydroxyl + 5'-phospho-(deoxyribonucleotide)m = (deoxyribonucleotide)n+m + AMP + beta-nicotinamide D-nucleotide.. Its function is as follows. DNA ligase that catalyzes the formation of phosphodiester linkages between 5'-phosphoryl and 3'-hydroxyl groups in double-stranded DNA using NAD as a coenzyme and as the energy source for the reaction. It is essential for DNA replication and repair of damaged DNA. This Microcystis aeruginosa (strain NIES-843 / IAM M-2473) protein is DNA ligase.